The sequence spans 125 residues: Calcitonin receptor-stimulating peptide 3 (125 aa).

Positions 1 to 25 (MGFWKFPPFLILSILVLYQAGMLHA) are cleaved as a signal peptide. Residues 26–79 (APFRMALGSSFDSATLTEEEMSLLLVAMVKDYVQMKATVLEQETEDFSITTQER) constitute a propeptide that is removed on maturation. Cysteine 81 and cysteine 86 are oxidised to a cystine. Position 116 is a leucine amide (leucine 116). A propeptide spanning residues 122–125 (QPQA) is cleaved from the precursor.

It belongs to the calcitonin family. In terms of tissue distribution, mainly expressed in the thyroid gland and CNS. Found in the nerve cells of cerebrum, hippocampus, hypothalamus, pons/midbrain and thalamus.

The protein resides in the secreted. The chain is Calcitonin receptor-stimulating peptide 3 (CRSP3) from Sus scrofa (Pig).